A 198-amino-acid polypeptide reads, in one-letter code: Peptidyl-tRNA hydrolase (198 aa).

Position 16 (tyrosine 16) interacts with tRNA. Histidine 21 serves as the catalytic Proton acceptor. The tRNA site is built by phenylalanine 67, asparagine 69, and asparagine 115.

Belongs to the PTH family. In terms of assembly, monomer.

The protein resides in the cytoplasm. The catalysed reaction is an N-acyl-L-alpha-aminoacyl-tRNA + H2O = an N-acyl-L-amino acid + a tRNA + H(+). Functionally, hydrolyzes ribosome-free peptidyl-tRNAs (with 1 or more amino acids incorporated), which drop off the ribosome during protein synthesis, or as a result of ribosome stalling. Catalyzes the release of premature peptidyl moieties from peptidyl-tRNA molecules trapped in stalled 50S ribosomal subunits, and thus maintains levels of free tRNAs and 50S ribosomes. The chain is Peptidyl-tRNA hydrolase from Prochlorococcus marinus (strain MIT 9301).